The sequence spans 336 residues: MIQKNWQELIKPNKVEFTSSSRTKATLVAEPLERGFGLTLGNALRRVLLSSLRGAAVTAVQIDGVLHEFSSIPGVREDVTDIVLNIKEIAIKMDGDDSKRMVVRKQGPGSVTAGDIQTVGDIEILNPDHVICTLDEGAEIRMEFTVNNGKGYVPAERNRAEDAPIGLIPVDSLYSPVKKVSYKVENTREGQVLDYDKLIMTIETNGSVSGEDAVAFAARILQDQLGVFVNFDEPQKEAEEESVTELAFNPALLKKVDELELSVRSANCLKNDNIVYIGDLIQKTEAEMLRTPNFGRKSLNEIKEVLASMGLHLGMEVPAWPPENIEDLAKRYEDQY.

The segment at 1–232 is alpha N-terminal domain (alpha-NTD); the sequence is MIQKNWQELI…DQLGVFVNFD (232 aa). The alpha C-terminal domain (alpha-CTD) stretch occupies residues 248 to 336; the sequence is FNPALLKKVD…DLAKRYEDQY (89 aa).

This sequence belongs to the RNA polymerase alpha chain family. In terms of assembly, homodimer. The RNAP catalytic core consists of 2 alpha, 1 beta, 1 beta' and 1 omega subunit. When a sigma factor is associated with the core the holoenzyme is formed, which can initiate transcription.

It catalyses the reaction RNA(n) + a ribonucleoside 5'-triphosphate = RNA(n+1) + diphosphate. DNA-dependent RNA polymerase catalyzes the transcription of DNA into RNA using the four ribonucleoside triphosphates as substrates. The chain is DNA-directed RNA polymerase subunit alpha from Rhizobium radiobacter (Agrobacterium tumefaciens).